The primary structure comprises 203 residues: MKIMVVYYSAYGHVHRLAEAVAEGASEIVDVEVVMRRVPETLPEALLKKIGVFEAQQAFAHVPVCEVAELETADAILFGTPARFGNMCGQMRSFLDATGGLWAKGALVGKVGSVFTSTGTQHGGQESTILSFHTTLLHHGMIIVGLPYTFQGQSRNDEITGCSPYGASTIAGSANDRWPTENELAGANFQGRHVACIAGKLFQ.

Residues 3–194 form the Flavodoxin-like domain; the sequence is IMVVYYSAYG…AGANFQGRHV (192 aa). FMN contacts are provided by residues 9 to 14 and 82 to 84; these read SAYGHV and ARF. Residue Tyr-11 coordinates NAD(+). Residue Trp-102 participates in substrate binding. Residues 117-123 and His-138 contribute to the FMN site; that span reads STGTQHG.

This sequence belongs to the WrbA family. It depends on FMN as a cofactor.

It carries out the reaction a quinone + NADH + H(+) = a quinol + NAD(+). The catalysed reaction is a quinone + NADPH + H(+) = a quinol + NADP(+). The sequence is that of NAD(P)H dehydrogenase (quinone) from Syntrophus aciditrophicus (strain SB).